A 329-amino-acid polypeptide reads, in one-letter code: Formimidoylglutamase (329 aa).

Mn(2+) contacts are provided by H133, D159, H161, D163, D253, and D255.

The protein belongs to the arginase family. Mn(2+) is required as a cofactor.

It carries out the reaction N-formimidoyl-L-glutamate + H2O = formamide + L-glutamate. It functions in the pathway amino-acid degradation; L-histidine degradation into L-glutamate; L-glutamate from N-formimidoyl-L-glutamate (hydrolase route): step 1/1. Catalyzes the conversion of N-formimidoyl-L-glutamate to L-glutamate and formamide. This is Formimidoylglutamase from Streptococcus gordonii (strain Challis / ATCC 35105 / BCRC 15272 / CH1 / DL1 / V288).